Reading from the N-terminus, the 169-residue chain is Aspartic protease inhibitor 3 (169 aa).

N-linked (GlcNAc...) asparagine glycosylation is present at N1. 2 disulfides stabilise this stretch: C30-C75 and C124-C134.

The protein belongs to the protease inhibitor I3 (leguminous Kunitz-type inhibitor) family.

The protein localises to the vacuole. Inhibitor of cathepsin D (aspartic protease). May also inhibit trypsin and chymotrypsin (serine proteases). Protects the plant by inhibiting proteases of invading organisms. This Solanum tuberosum (Potato) protein is Aspartic protease inhibitor 3.